Here is a 338-residue protein sequence, read N- to C-terminus: Ketol-acid reductoisomerase (NADP(+)) (338 aa).

The KARI N-terminal Rossmann domain maps to 1-181; it reads MKVFYDKDCD…GGGRAGIIET (181 aa). NADP(+) is bound by residues 24-27, R47, and S52; that span reads YGSQ. H107 is a catalytic residue. G133 is an NADP(+) binding site. The region spanning 182–327 is the KARI C-terminal knotted domain; it reads NFREETETDL…AKLRAMMPWI (146 aa). Mg(2+) contacts are provided by D190, E194, E226, and E230. S251 is a binding site for substrate.

The protein belongs to the ketol-acid reductoisomerase family. It depends on Mg(2+) as a cofactor.

The catalysed reaction is (2R)-2,3-dihydroxy-3-methylbutanoate + NADP(+) = (2S)-2-acetolactate + NADPH + H(+). The enzyme catalyses (2R,3R)-2,3-dihydroxy-3-methylpentanoate + NADP(+) = (S)-2-ethyl-2-hydroxy-3-oxobutanoate + NADPH + H(+). It participates in amino-acid biosynthesis; L-isoleucine biosynthesis; L-isoleucine from 2-oxobutanoate: step 2/4. Its pathway is amino-acid biosynthesis; L-valine biosynthesis; L-valine from pyruvate: step 2/4. Functionally, involved in the biosynthesis of branched-chain amino acids (BCAA). Catalyzes an alkyl-migration followed by a ketol-acid reduction of (S)-2-acetolactate (S2AL) to yield (R)-2,3-dihydroxy-isovalerate. In the isomerase reaction, S2AL is rearranged via a Mg-dependent methyl migration to produce 3-hydroxy-3-methyl-2-ketobutyrate (HMKB). In the reductase reaction, this 2-ketoacid undergoes a metal-dependent reduction by NADPH to yield (R)-2,3-dihydroxy-isovalerate. This chain is Ketol-acid reductoisomerase (NADP(+)), found in Janthinobacterium sp. (strain Marseille) (Minibacterium massiliensis).